We begin with the raw amino-acid sequence, 301 residues long: Thyrotroph embryonic factor (301 aa).

Disordered regions lie at residues 1-70 (MSDA…ASTM) and 130-174 (ESAS…DPSC). S30 carries the post-translational modification Phosphoserine. Residues 39 to 59 (KLMENPPRETRLDKEKGKEKL) are compositionally biased toward basic and acidic residues. Residues 131–158 (SASSSTASPPSSSTAIFQPSETVSSTES) are compositionally biased toward low complexity. The bZIP domain maps to 231–294 (DEKYWTRRKK…GKCKTIVSKY (64 aa)). Residues 233–253 (KYWTRRKKNNVAAKRSRDARR) form a basic motif region. Positions 254 to 261 (LKENQITI) are leucine-zipper.

The protein belongs to the bZIP family. PAR subfamily. In terms of assembly, binds DNA as a homodimer or a heterodimer. Can form a heterodimer with DBP. As to expression, isoform Alpha and isoform Beta are expressed at high levels in lung, bladder, kidney, gut and brain.

The protein resides in the nucleus. Functionally, transcription factor that binds to and transactivates the TSHB promoter. Binds to a minimal DNA-binding sequence 5'-[TC][AG][AG]TTA[TC][AG]-3'. Also activates the telokin promoter in smooth muscle-specific and calcium-dependent manner. This is Thyrotroph embryonic factor (Tef) from Mus musculus (Mouse).